The sequence spans 150 residues: Ribonuclease H (150 aa).

One can recognise an RNase H type-1 domain in the interval 1–141 (MKSIEVHTDG…VDVLARNQAT (141 aa)). D9, E47, D69, and D133 together coordinate Mg(2+).

It belongs to the RNase H family. Monomer. Mg(2+) is required as a cofactor.

Its subcellular location is the cytoplasm. It catalyses the reaction Endonucleolytic cleavage to 5'-phosphomonoester.. Endonuclease that specifically degrades the RNA of RNA-DNA hybrids. This chain is Ribonuclease H, found in Xanthomonas oryzae pv. oryzae (strain MAFF 311018).